A 660-amino-acid polypeptide reads, in one-letter code: Alpha-1,2-mannosyltransferase MNN21 (660 aa).

Over 1 to 17 the chain is Cytoplasmic; the sequence is MFQQLTYRLRLFRRRHK. The helical transmembrane segment at 18 to 38 threads the bilayer; it reads YIFINSIFLSVIIIFLIYSYW. The Extracellular portion of the chain corresponds to 39 to 660; that stretch reads SNLPAEDNSA…FLESTQNITD (622 aa). The disordered stretch occupies residues 75–125; that stretch reads PFEEKKPQVNPNNNQEVGVESGASEISQHKQQQQQQQHAKEPTTKTSSKSL. Asn-657 is a glycosylation site (N-linked (GlcNAc...) asparagine).

It belongs to the MNN1/MNT family.

The protein resides in the golgi apparatus membrane. Its pathway is protein modification; protein glycosylation. Functionally, alpha-1,2-mannosyltransferase required for cell wall integrity. Responsible for addition of the first alpha-1,2-linked mannose to form the branches on the mannan backbone of oligosaccharides. Addition of alpha-1,2-mannose is required for stabilization of the alpha-1,6-mannose backbone and hence regulates mannan fibril length; and is important for both immune recognition and virulence. In Candida albicans (strain SC5314 / ATCC MYA-2876) (Yeast), this protein is Alpha-1,2-mannosyltransferase MNN21 (MNN21).